We begin with the raw amino-acid sequence, 546 residues long: Arginine--tRNA ligase (546 aa).

Positions 122–132 (ANPTGPFTVGH) match the 'HIGH' region motif.

This sequence belongs to the class-I aminoacyl-tRNA synthetase family. As to quaternary structure, monomer.

It is found in the cytoplasm. The catalysed reaction is tRNA(Arg) + L-arginine + ATP = L-arginyl-tRNA(Arg) + AMP + diphosphate. The sequence is that of Arginine--tRNA ligase from Thermotoga petrophila (strain ATCC BAA-488 / DSM 13995 / JCM 10881 / RKU-1).